Reading from the N-terminus, the 978-residue chain is Mineralocorticoid receptor (978 aa).

A modulating region spans residues 1-602 (METKGYHSLP…STGSSRPSKI (602 aa)). Positions 234–243 (SLTCSPSVEN) are enriched in polar residues. Disordered regions lie at residues 234–331 (SLTC…STVG) and 353–372 (GAIQ…AHDV). Ser250, Ser259, Ser283, Ser287, and Ser299 each carry phosphoserine. Positions 259 to 300 (SPLSSPLSSMKSPISSPPSHCSVKSPVSSPNNVPLRSSVSSP) are enriched in low complexity. A compositionally biased stretch (polar residues) spans 301–331 (ANLNNSRCSVSSPSNTNNRSTLSSPTASTVG). Cys603, Cys606, Cys620, Cys623, Cys637, Cys643, Cys653, and Cys656 together coordinate Zn(2+). 2 consecutive NR C4-type zinc fingers follow at residues 603 to 623 (CLVC…CGSC) and 637 to 661 (CAGR…LQKC). Residues 603–666 (CLVCGDEASG…RLQKCLQAGM (64 aa)) constitute a DNA-binding region (nuclear receptor). A hinge region spans residues 667–719 (NLGARKSKKLGKLKGLHEEQPQQPPPPPPQSPEEGTTYIAPTKEPSVNSALVP). Positions 681–706 (GLHEEQPQQPPPPPPQSPEEGTTYIA) are disordered. Residues 688–697 (QQPPPPPPQS) are compositionally biased toward pro residues. One can recognise an NR LBD domain in the interval 720 to 958 (QLASITRALT…EFPAMLVEII (239 aa)). Asn764 and Gln770 together coordinate 21-hydroxyprogesterone. Aldosterone contacts are provided by Asn764 and Gln770. Positions 764 and 770 each coordinate progesterone. An important for coactivator binding region spans residues 776-779 (KWAK). 21-hydroxyprogesterone contacts are provided by Arg811 and Thr939. 2 residues coordinate aldosterone: Arg811 and Thr939. Residues Arg811 and Thr939 each coordinate progesterone.

The protein belongs to the nuclear hormone receptor family. NR3 subfamily. In terms of assembly, heteromultimeric cytoplasmic complex with HSP90, HSP70, and FKBP4, in the absence of ligand. After ligand binding, it translocates to the nucleus and binds to DNA as a homodimer and as a heterodimer with NR3C1. Binds the coactivator NCOA2. May interact with HSD11B2 in the absence of ligand. Binds the coactivators NCOA1, TIF1 and NRIP1. Phosphorylated. In terms of tissue distribution, expressed in heart and kidney.

The protein resides in the cytoplasm. It is found in the nucleus. Its subcellular location is the endoplasmic reticulum membrane. Its function is as follows. Receptor for both mineralocorticoids (MC) such as aldosterone and glucocorticoids (GC) such as corticosterone or cortisol. Binds to mineralocorticoid response elements (MRE) and transactivates target genes. The effect of MC is to increase ion and water transport and thus raise extracellular fluid volume and blood pressure and lower potassium levels. This Mus musculus (Mouse) protein is Mineralocorticoid receptor (Nr3c2).